The following is a 306-amino-acid chain: Acetyl-coenzyme A carboxylase carboxyl transferase subunit beta (306 aa).

One can recognise a CoA carboxyltransferase N-terminal domain in the interval 25–294; the sequence is LWIKDPTSGE…VVTPSPPSPT (270 aa). The interval 284-306 is disordered; it reads AVVTPSPPSPTDSQTSLSKTKAA.

It belongs to the AccD/PCCB family. As to quaternary structure, acetyl-CoA carboxylase is a heterohexamer composed of biotin carboxyl carrier protein (AccB), biotin carboxylase (AccC) and two subunits each of ACCase subunit alpha (AccA) and ACCase subunit beta (AccD).

Its subcellular location is the cytoplasm. The enzyme catalyses N(6)-carboxybiotinyl-L-lysyl-[protein] + acetyl-CoA = N(6)-biotinyl-L-lysyl-[protein] + malonyl-CoA. It functions in the pathway lipid metabolism; malonyl-CoA biosynthesis; malonyl-CoA from acetyl-CoA: step 1/1. Component of the acetyl coenzyme A carboxylase (ACC) complex. Biotin carboxylase (BC) catalyzes the carboxylation of biotin on its carrier protein (BCCP) and then the CO(2) group is transferred by the transcarboxylase to acetyl-CoA to form malonyl-CoA. This is Acetyl-coenzyme A carboxylase carboxyl transferase subunit beta from Bartonella tribocorum (strain CIP 105476 / IBS 506).